The following is a 534-amino-acid chain: Prolyl 4-hydroxylase subunit alpha-2 (534 aa).

Residues methionine 1–alanine 21 form the signal peptide. The N-linked (GlcNAc...) asparagine glycan is linked to asparagine 115. Residues valine 207 to histidine 240 form a TPR repeat. An N-linked (GlcNAc...) asparagine glycan is attached at asparagine 263. Residues threonine 413 to glutamate 519 form the Fe2OG dioxygenase domain. Positions 431, 433, and 500 each coordinate Fe cation. Lysine 510 is a binding site for 2-oxoglutarate.

The protein belongs to the P4HA family. In terms of assembly, heterotetramer of two alpha-2 chains and two beta chains (the beta chain is the multi-functional PDI). The cofactor is Fe(2+). Requires L-ascorbate as cofactor.

The protein localises to the endoplasmic reticulum lumen. The catalysed reaction is L-prolyl-[collagen] + 2-oxoglutarate + O2 = trans-4-hydroxy-L-prolyl-[collagen] + succinate + CO2. Its function is as follows. Catalyzes the post-translational formation of 4-hydroxyproline in -Xaa-Pro-Gly- sequences in collagens and other proteins. The protein is Prolyl 4-hydroxylase subunit alpha-2 (P4HA2) of Gallus gallus (Chicken).